We begin with the raw amino-acid sequence, 122 residues long: Large ribosomal subunit protein uL14 (122 aa).

The protein belongs to the universal ribosomal protein uL14 family. In terms of assembly, part of the 50S ribosomal subunit. Forms a cluster with proteins L3 and L19. In the 70S ribosome, L14 and L19 interact and together make contacts with the 16S rRNA in bridges B5 and B8.

Its function is as follows. Binds to 23S rRNA. Forms part of two intersubunit bridges in the 70S ribosome. This is Large ribosomal subunit protein uL14 from Leuconostoc mesenteroides subsp. mesenteroides (strain ATCC 8293 / DSM 20343 / BCRC 11652 / CCM 1803 / JCM 6124 / NCDO 523 / NBRC 100496 / NCIMB 8023 / NCTC 12954 / NRRL B-1118 / 37Y).